We begin with the raw amino-acid sequence, 469 residues long: Probable indole-3-acetic acid-amido synthetase GH3.13 (469 aa).

Residues 1–26 (MTSTSSENAPDHDHDHDASSPAPATA) are disordered. Over residues 9-18 (APDHDHDHDA) the composition is skewed to basic and acidic residues.

It belongs to the IAA-amido conjugating enzyme family.

Functionally, may catalyze the synthesis of indole-3-acetic acid (IAA)-amino acid conjugates, providing a mechanism for the plant to cope with the presence of excess auxin. The sequence is that of Probable indole-3-acetic acid-amido synthetase GH3.13 (GH3.13) from Oryza sativa subsp. japonica (Rice).